Here is a 219-residue protein sequence, read N- to C-terminus: Transcriptional regulator AcuR (219 aa).

Positions 1–25 (MPLTDTPPSVPQKPRRGRPRGAPDA) are disordered. Residues 26-86 (SLAHQSLIRA…ALIEAYDTYF (61 aa)) enclose the HTH tetR-type domain. Positions 49–68 (GVDEILKAARVPKGSFYHYF) form a DNA-binding region, H-T-H motif.

In terms of biological role, a transcriptional repressor for its operon. Probably binds to 2 operator sequences in the promoter. In Cereibacter sphaeroides (strain ATCC 17023 / DSM 158 / JCM 6121 / CCUG 31486 / LMG 2827 / NBRC 12203 / NCIMB 8253 / ATH 2.4.1.) (Rhodobacter sphaeroides), this protein is Transcriptional regulator AcuR (acuR).